A 216-amino-acid polypeptide reads, in one-letter code: 3-keto-L-gulonate-6-phosphate decarboxylase UlaD (216 aa).

Asp11 serves as a coordination point for substrate. Residues Glu33 and Asp62 each contribute to the Mg(2+) site. Arg192 serves as a coordination point for substrate.

The protein belongs to the HPS/KGPDC family. KGPDC subfamily. As to quaternary structure, homodimer. The cofactor is Mg(2+).

It carries out the reaction 3-dehydro-L-gulonate 6-phosphate + H(+) = L-xylulose 5-phosphate + CO2. Its pathway is cofactor degradation; L-ascorbate degradation; D-xylulose 5-phosphate from L-ascorbate: step 2/4. Functionally, catalyzes the decarboxylation of 3-keto-L-gulonate-6-P into L-xylulose-5-P. Is involved in the anaerobic L-ascorbate utilization. This chain is 3-keto-L-gulonate-6-phosphate decarboxylase UlaD, found in Escherichia coli O139:H28 (strain E24377A / ETEC).